The following is a 238-amino-acid chain: Orotidine 5'-phosphate decarboxylase (238 aa).

Residues aspartate 10, lysine 32, 59-68, threonine 122, arginine 184, glutamine 193, glycine 213, and arginine 214 each bind substrate; that span reads DLKLHDIPNT. The active-site Proton donor is lysine 61.

It belongs to the OMP decarboxylase family. Type 1 subfamily. Homodimer.

It catalyses the reaction orotidine 5'-phosphate + H(+) = UMP + CO2. It functions in the pathway pyrimidine metabolism; UMP biosynthesis via de novo pathway; UMP from orotate: step 2/2. Its function is as follows. Catalyzes the decarboxylation of orotidine 5'-monophosphate (OMP) to uridine 5'-monophosphate (UMP). In Bacillus cytotoxicus (strain DSM 22905 / CIP 110041 / 391-98 / NVH 391-98), this protein is Orotidine 5'-phosphate decarboxylase.